The primary structure comprises 132 residues: ATP synthase epsilon chain, chloroplastic (132 aa).

The protein belongs to the ATPase epsilon chain family. F-type ATPases have 2 components, CF(1) - the catalytic core - and CF(0) - the membrane proton channel. CF(1) has five subunits: alpha(3), beta(3), gamma(1), delta(1), epsilon(1). CF(0) has three main subunits: a, b and c.

The protein resides in the plastid. It is found in the chloroplast thylakoid membrane. Its function is as follows. Produces ATP from ADP in the presence of a proton gradient across the membrane. The polypeptide is ATP synthase epsilon chain, chloroplastic (Pylaiella littoralis (Seaweed)).